The sequence spans 515 residues: Mucin-like protein Glc1.8b (515 aa).

The first 20 residues, 1–20, serve as a signal peptide directing secretion; the sequence is MSQITLIILVLAIGFSCTKS. Topologically, residues 21–467 are extracellular; that stretch reads HPINSTRDGE…ANDIKKPAFP (447 aa). Residues N24, N45, N51, N60, N85, N93, N102, N123, N129, N138, N180, N201, N207, N216, N258, N279, N285, N294, N319, N327, N336, N357, N363, N372, N397, N405, N413, N434, and N441 are each glycosylated (N-linked (GlcNAc...) asparagine; by host). Residues 80–114 are disordered; the sequence is SKKDENITGQSEINTSAKSQPINSTRDGEDSGTDL. Over residues 86–104 the composition is skewed to polar residues; sequence ITGQSEINTSAKSQPINST. The segment at 314–358 is disordered; it reads SKKDENITGQSEINTSAKSQPINSTRDGEDSGTDLKNLLTDPANT. Residues 320-338 are compositionally biased toward polar residues; sequence ITGQSEINTSAKSQPINST. Residues 393-413 form a disordered region; that stretch reads RKDENVTGQSEFNISTNSNLN. A helical transmembrane segment spans residues 468 to 488; it reads YCIILITFQIVTVGMIIYLVF. The Cytoplasmic portion of the chain corresponds to 489–515; it reads RTMRKPCQSERAIPLNSFGFGNNSSYE.

It belongs to the polydnaviridae Glc1.8 protein family.

The protein resides in the host membrane. Involved in suppression of the insect cellular immune response. Inhibits host hemocyte adhesion and phagocytosis. The protein is Mucin-like protein Glc1.8b (O16) of Microplitis demolitor (Parasitoid wasp).